A 476-amino-acid polypeptide reads, in one-letter code: Undecaprenyl-phosphate galactose phosphotransferase (476 aa).

5 helical membrane-spanning segments follow: residues 15-35 (IFLAISDLIFFNLALWFSLGC), 52-72 (LDTRVITHFILSVVCVGWFWI), 93-113 (TIVIFAIFDLALIAFTKWQFS), 115-135 (YVWVFCWTFALILVPFFRALT), and 283-303 (FDIVCSIMILIIASPLMIYLW). The Cytoplasmic portion of the chain corresponds to 304–476 (YKVTRDGGPA…KVVLRRDGAY (173 aa)).

This sequence belongs to the bacterial sugar transferase family.

Its subcellular location is the cell inner membrane. It carries out the reaction di-trans,octa-cis-undecaprenyl phosphate + UDP-alpha-D-galactose = alpha-D-galactosyl-di-trans,octa-cis-undecaprenyl diphosphate + UMP. The protein operates within bacterial outer membrane biogenesis; LPS O-antigen biosynthesis. Is responsible for transferring galactose-1-phosphate to the lipid precursor undecaprenol phosphate in the first steps of O-polysaccharide biosynthesis. The protein is Undecaprenyl-phosphate galactose phosphotransferase (rfbP) of Salmonella typhimurium (strain LT2 / SGSC1412 / ATCC 700720).